Here is a 672-residue protein sequence, read N- to C-terminus: UvrABC system protein B (672 aa).

The Helicase ATP-binding domain maps to 26–181 (AGLEDGLAYQ…ILQRLAELQY (156 aa)). Residue 39 to 46 (GVTGSGKT) coordinates ATP. A Beta-hairpin motif is present at residues 92-115 (YYDYYQPEAYVPSSDTYIEKDASI). A Helicase C-terminal domain is found at 430–592 (QVDDLLSEIK…ITPKSIQKAV (163 aa)). Residues 631-666 (AKELRKLEEQMYHHARNLEFEEAAAVRDKIQHIRKG) enclose the UVR domain.

Belongs to the UvrB family. As to quaternary structure, forms a heterotetramer with UvrA during the search for lesions. Interacts with UvrC in an incision complex.

It localises to the cytoplasm. Its function is as follows. The UvrABC repair system catalyzes the recognition and processing of DNA lesions. A damage recognition complex composed of 2 UvrA and 2 UvrB subunits scans DNA for abnormalities. Upon binding of the UvrA(2)B(2) complex to a putative damaged site, the DNA wraps around one UvrB monomer. DNA wrap is dependent on ATP binding by UvrB and probably causes local melting of the DNA helix, facilitating insertion of UvrB beta-hairpin between the DNA strands. Then UvrB probes one DNA strand for the presence of a lesion. If a lesion is found the UvrA subunits dissociate and the UvrB-DNA preincision complex is formed. This complex is subsequently bound by UvrC and the second UvrB is released. If no lesion is found, the DNA wraps around the other UvrB subunit that will check the other stand for damage. The sequence is that of UvrABC system protein B from Coxiella burnetii (strain CbuG_Q212) (Coxiella burnetii (strain Q212)).